Reading from the N-terminus, the 415-residue chain is Levansucrase LscA (415 aa).

Sucrose contacts are provided by Trp-45, Asp-46, Ala-132, Arg-202, and Asp-203. Residue Asp-46 is the Nucleophile of the active site. Glu-287 functions as the Proton donor/acceptor in the catalytic mechanism.

The protein belongs to the glycosyl hydrolase 68 family.

Its subcellular location is the periplasm. It carries out the reaction [6)-beta-D-fructofuranosyl-(2-&gt;](n) alpha-D-glucopyranoside + sucrose = [6)-beta-D-fructofuranosyl-(2-&gt;](n+1) alpha-D-glucopyranoside + D-glucose. Catalyzes the synthesis of levan, a fructose polymer, by transferring the fructosyl moiety from sucrose to a growing acceptor molecule. LscA encodes a functional enzyme in vitro, when expressed in E.coli under control of the vector-based lactose promoter (Plac), and it can restore levan production to the lscB-lscC double mutant. However, lscA is not expressed in P.savastanoi pv. glycinea PG4180 under standard conditions. It could be an ancestral Lsc variant in P.syringae. This is Levansucrase LscA from Pseudomonas savastanoi pv. glycinea (Pseudomonas syringae pv. glycinea).